The following is a 544-amino-acid chain: Glucans biosynthesis protein G 1 (544 aa).

Residues 1–33 (MVSLLRCQSFKPSSIICSLALSAAFALSGTAFA) form the signal peptide. Residues 36 to 58 (SKPAENKPATPVVSPPKATAPSA) are disordered.

The protein belongs to the OpgD/OpgG family.

The protein localises to the periplasm. It functions in the pathway glycan metabolism; osmoregulated periplasmic glucan (OPG) biosynthesis. Involved in the biosynthesis of osmoregulated periplasmic glucans (OPGs). In Shewanella oneidensis (strain ATCC 700550 / JCM 31522 / CIP 106686 / LMG 19005 / NCIMB 14063 / MR-1), this protein is Glucans biosynthesis protein G 1 (opgG1).